The following is a 948-amino-acid chain: Sensor histidine kinase RcsC (948 aa).

Topologically, residues 1-20 (MKYLASFRTTLKVSRYLFRA) are cytoplasmic. The chain crosses the membrane as a helical span at residues 21-41 (LALLIWLLIAFVSVFYIVNAL). At 42–313 (HQRESEIRQE…PVDLVLERIR (272 aa)) the chain is on the periplasmic side. The helical transmembrane segment at 314 to 334 (ILILNAILLNVLVGAGLFTLA) threads the bilayer. Over 335-948 (RMYERRIFIP…YAERVRKTRA (614 aa)) the chain is Cytoplasmic. The PAS domain maps to 357–425 (QFNRKIVASA…VLTSNNTNLQ (69 aa)). In terms of domain architecture, Histidine kinase spans 476 to 692 (TVSHELRTPL…QFTLRIPLYG (217 aa)). Histidine 479 carries the post-translational modification Phosphohistidine; by autocatalysis. An ABL domain is found at 705 to 805 (AGTCCWLAVR…ARIYSIELDS (101 aa)). Residues 826–940 (MILVVDDHPI…ALKQTLAVYA (115 aa)) enclose the Response regulatory domain. Residue aspartate 875 is modified to 4-aspartylphosphate.

It belongs to the RcsC family. As to quaternary structure, interacts with RcsD. Autophosphorylated. Activation probably requires a transfer of a phosphate group from a His in the transmitter domain to an Asp in the receiver domain.

The protein resides in the cell inner membrane. It carries out the reaction ATP + protein L-histidine = ADP + protein N-phospho-L-histidine.. In terms of biological role, component of the Rcs signaling system, which controls transcription of numerous genes. RcsC functions as a membrane-associated protein kinase that phosphorylates RcsD in response to environmental signals. The phosphoryl group is then transferred to the response regulator RcsB. The sequence is that of Sensor histidine kinase RcsC from Salmonella typhi.